Here is a 922-residue protein sequence, read N- to C-terminus: Protein translocase subunit SecA (922 aa).

ATP contacts are provided by residues Gln-87, Gly-105–Thr-109, and Asp-519. The tract at residues His-850–Ala-891 is disordered. Residues Gln-854–Asn-865 are compositionally biased toward polar residues. Residues Cys-906, Cys-908, Cys-917, and Cys-918 each contribute to the Zn(2+) site.

Belongs to the SecA family. In terms of assembly, monomer and homodimer. Part of the essential Sec protein translocation apparatus which comprises SecA, SecYEG and auxiliary proteins SecDF. Other proteins may also be involved. Zn(2+) is required as a cofactor.

It is found in the cell inner membrane. It localises to the cytoplasm. The catalysed reaction is ATP + H2O + cellular proteinSide 1 = ADP + phosphate + cellular proteinSide 2.. Functionally, part of the Sec protein translocase complex. Interacts with the SecYEG preprotein conducting channel. Has a central role in coupling the hydrolysis of ATP to the transfer of proteins into and across the cell membrane, serving as an ATP-driven molecular motor driving the stepwise translocation of polypeptide chains across the membrane. In Treponema denticola (strain ATCC 35405 / DSM 14222 / CIP 103919 / JCM 8153 / KCTC 15104), this protein is Protein translocase subunit SecA.